An 849-amino-acid polypeptide reads, in one-letter code: Autoinducer 1 sensor kinase/phosphatase LuxN (849 aa).

7 helical membrane passes run 9–29, 41–61, 160–180, 196–216, 220–242, 251–275, and 283–301; these read IVYA…MWLF, VIFG…IAWI, SYFF…LVAM, IAGI…MTYF, FSLT…YALL, YIAY…AIFI, and WLIA…QLLY. Residues 468–683 enclose the Histidine kinase domain; the sequence is SIAHEMRNPL…EFHLYFPVVP (216 aa). A Phosphohistidine; by autocatalysis modification is found at His-471. The 114-residue stretch at 722 to 835 folds into the Response regulatory domain; sequence TVLIVDDKEV…ALRHVLGNWL (114 aa). Position 771 is a 4-aspartylphosphate (Asp-771).

It is found in the cell inner membrane. It carries out the reaction ATP + protein L-histidine = ADP + protein N-phospho-L-histidine.. Functionally, at low cell density, in the absence of AI-1 (autoinducer 1), LuxN has a kinase activity and autophosphorylates on His-471. The phosphoryl group is then transferred on Asp-771 of the response regulator domain. The phosphoryl group is transferred to LuxU, and ultimately to LuxO. At high cell density, in the presence of AI-1, the kinase activity is inactivated, and the response regulator domain has a phosphatase activity. LuxN phosphatase acts on itself. As LuxU could function to establish an equilibrium between the aspartyl-phosphate of LuxN and the aspartyl-phosphate of LuxO, LuxU transfers phosphate from LuxO to LuxN and finally phosphate is drained from the system. In Vibrio harveyi (Beneckea harveyi), this protein is Autoinducer 1 sensor kinase/phosphatase LuxN (luxN).